The primary structure comprises 275 residues: 3-methyl-2-oxobutanoate hydroxymethyltransferase (275 aa).

Asp-49 and Asp-88 together coordinate Mg(2+). Residues Asp-49–Ser-50, Asp-88, and Lys-118 each bind 3-methyl-2-oxobutanoate. Residue Glu-120 participates in Mg(2+) binding. Residue Glu-187 is the Proton acceptor of the active site.

Belongs to the PanB family. As to quaternary structure, homodecamer; pentamer of dimers. Mg(2+) serves as cofactor.

Its subcellular location is the cytoplasm. It carries out the reaction 3-methyl-2-oxobutanoate + (6R)-5,10-methylene-5,6,7,8-tetrahydrofolate + H2O = 2-dehydropantoate + (6S)-5,6,7,8-tetrahydrofolate. It participates in cofactor biosynthesis; (R)-pantothenate biosynthesis; (R)-pantoate from 3-methyl-2-oxobutanoate: step 1/2. Catalyzes the reversible reaction in which hydroxymethyl group from 5,10-methylenetetrahydrofolate is transferred onto alpha-ketoisovalerate to form ketopantoate. This is 3-methyl-2-oxobutanoate hydroxymethyltransferase from Brucella suis (strain ATCC 23445 / NCTC 10510).